The primary structure comprises 994 residues: UPF0182 protein Strop_3729 (994 aa).

The next 7 helical transmembrane spans lie at 18-38 (IGVL…VQAW), 61-81 (LLLF…NLWL), 110-130 (IGLW…LSAQ), 174-194 (FTAV…FGGI), 209-229 (AHLS…YVLD), 260-280 (ILAY…NAWM), and 283-303 (LVWP…IGGI). 2 disordered regions span residues 891–934 (GEQA…AEAA) and 970–994 (FEQA…SPGG). Over residues 897–926 (PSPPPSDDETPPSPTPTPTPTTPSVTPPPL) the composition is skewed to pro residues.

The protein belongs to the UPF0182 family.

It localises to the cell membrane. The polypeptide is UPF0182 protein Strop_3729 (Salinispora tropica (strain ATCC BAA-916 / DSM 44818 / JCM 13857 / NBRC 105044 / CNB-440)).